Consider the following 550-residue polypeptide: Chaperonin GroEL (550 aa).

Residues 30–33, Lys51, 87–91, Gly415, 479–481, and Asp495 contribute to the ATP site; these read TLGP, DGTTT, and NAA.

Belongs to the chaperonin (HSP60) family. In terms of assembly, forms a cylinder of 14 subunits composed of two heptameric rings stacked back-to-back. Interacts with the co-chaperonin GroES.

It localises to the cytoplasm. The enzyme catalyses ATP + H2O + a folded polypeptide = ADP + phosphate + an unfolded polypeptide.. In terms of biological role, together with its co-chaperonin GroES, plays an essential role in assisting protein folding. The GroEL-GroES system forms a nano-cage that allows encapsulation of the non-native substrate proteins and provides a physical environment optimized to promote and accelerate protein folding. This is Chaperonin GroEL from Aromatoleum aromaticum (strain DSM 19018 / LMG 30748 / EbN1) (Azoarcus sp. (strain EbN1)).